Consider the following 1664-residue polypeptide: DNA-directed RNA polymerase I subunit RPA190 (1664 aa).

8 residues coordinate Zn(2+): Cys62, Cys65, Cys72, His75, Cys102, Cys105, Cys233, and Cys236. The segment at 280-310 is disordered; sequence QAKKLDGSNEASANDEESFDVGRNPTTRPKT. 3 residues coordinate Mg(2+): Asp627, Asp629, and Asp631. Ser889 bears the Phosphoserine mark. Residues 992-1004 form a bridging helix region; that stretch reads PQEYYFHCMAGRE. Positions 1343 to 1423 are disordered; sequence DIGVAVPRLQ…DSDSEDEDVD (81 aa). The segment covering 1393–1414 has biased composition (basic and acidic residues); sequence ETMREAEKSSDEEGIDSDKESD. Ser1636 is subject to Phosphoserine.

It belongs to the RNA polymerase beta' chain family. In terms of assembly, component of the RNA polymerase I (Pol I) complex consisting of 14 subunits: RPA135, RPA190, RPC40, RPA14, RPB5, RPO26, RPA43, RPB8, RPA12, RPB10, RPC19, RPC10, RPA49 and RPA34. The complex is composed of a horseshoe-shaped core containing ten subunits (RPA135, RPA190, RPB5, RPO26, RPB8, RPB10, RPC10, RPA12, RPC19 and RPC40) where RPA135 and RPA190 form the DNA-binding cleft. Outside of the core, RPA14 and RPA43 form the stalk that mediates interactions with transcription initiation factors and newly synthesized RNA.

The protein resides in the nucleus. It localises to the nucleolus. The enzyme catalyses RNA(n) + a ribonucleoside 5'-triphosphate = RNA(n+1) + diphosphate. In terms of biological role, DNA-dependent RNA polymerases catalyze the transcription of DNA into RNA using the four ribonucleoside triphosphates as substrates. Component of RNA polymerase I (Pol I) which synthesizes ribosomal RNA precursors. Besides, RNA polymerase I has intrinsic RNA cleavage activity. RPA190 and RPA135 both contribute to the polymerase catalytic activity and together form the Pol I active center. In addition, subunit RPA12 contributes a catalytic zinc ribbon that is required for RNA cleavage by Pol I. A single stranded DNA template strand of the promoter is positioned within the central active site cleft of Pol I. A bridging helix emanates from RPA190 and crosses the cleft near the catalytic site and is thought to promote translocation of Pol I by acting as a ratchet that moves the RNA-DNA hybrid through the active site by switching from straight to bent conformations at each step of nucleotide addition. This Saccharomyces cerevisiae (strain ATCC 204508 / S288c) (Baker's yeast) protein is DNA-directed RNA polymerase I subunit RPA190 (RPA190).